The sequence spans 329 residues: Vanillate O-demethylase oxygenase subunit (329 aa).

Residues Met1–Val84 enclose the Rieske domain. Residues Cys24, His26, Cys43, and His46 each contribute to the [2Fe-2S] cluster site.

It belongs to the bacterial ring-hydroxylating dioxygenase alpha subunit family. As to quaternary structure, this demethylase system consists of two proteins: an oxygenase and an oxygenase reductase. [2Fe-2S] cluster serves as cofactor. Requires Fe cation as cofactor.

It catalyses the reaction vanillate + NADH + O2 + H(+) = 3,4-dihydroxybenzoate + formaldehyde + NAD(+) + H2O. It functions in the pathway xenobiotic degradation; vanillyl-alcohol degradation. The polypeptide is Vanillate O-demethylase oxygenase subunit (vanA) (Pseudomonas sp. (strain ATCC 19151)).